Reading from the N-terminus, the 374-residue chain is Erythronate-4-phosphate dehydrogenase (374 aa).

Substrate is bound by residues serine 53 and threonine 75. Aspartate 160 is an NAD(+) binding site. The active site involves arginine 222. An NAD(+)-binding site is contributed by aspartate 246. The active site involves glutamate 251. Catalysis depends on histidine 268, which acts as the Proton donor. Glycine 271 is a binding site for NAD(+). A substrate-binding site is contributed by tyrosine 272.

The protein belongs to the D-isomer specific 2-hydroxyacid dehydrogenase family. PdxB subfamily. As to quaternary structure, homodimer.

The protein localises to the cytoplasm. It carries out the reaction 4-phospho-D-erythronate + NAD(+) = (R)-3-hydroxy-2-oxo-4-phosphooxybutanoate + NADH + H(+). It functions in the pathway cofactor biosynthesis; pyridoxine 5'-phosphate biosynthesis; pyridoxine 5'-phosphate from D-erythrose 4-phosphate: step 2/5. Functionally, catalyzes the oxidation of erythronate-4-phosphate to 3-hydroxy-2-oxo-4-phosphonooxybutanoate. The polypeptide is Erythronate-4-phosphate dehydrogenase (Psychrobacter sp. (strain PRwf-1)).